The following is a 68-amino-acid chain: Bifunctional protein GlmU (68 aa).

Residues 9–12 (LAAG) and lysine 23 each bind UDP-N-acetyl-alpha-D-glucosamine.

In the N-terminal section; belongs to the N-acetylglucosamine-1-phosphate uridyltransferase family. This sequence in the C-terminal section; belongs to the transferase hexapeptide repeat family. In terms of assembly, homotrimer. The cofactor is Mg(2+).

It localises to the cytoplasm. The enzyme catalyses alpha-D-glucosamine 1-phosphate + acetyl-CoA = N-acetyl-alpha-D-glucosamine 1-phosphate + CoA + H(+). It carries out the reaction N-acetyl-alpha-D-glucosamine 1-phosphate + UTP + H(+) = UDP-N-acetyl-alpha-D-glucosamine + diphosphate. It functions in the pathway nucleotide-sugar biosynthesis; UDP-N-acetyl-alpha-D-glucosamine biosynthesis; N-acetyl-alpha-D-glucosamine 1-phosphate from alpha-D-glucosamine 6-phosphate (route II): step 2/2. Its pathway is nucleotide-sugar biosynthesis; UDP-N-acetyl-alpha-D-glucosamine biosynthesis; UDP-N-acetyl-alpha-D-glucosamine from N-acetyl-alpha-D-glucosamine 1-phosphate: step 1/1. It participates in bacterial outer membrane biogenesis; LPS lipid A biosynthesis. In terms of biological role, catalyzes the last two sequential reactions in the de novo biosynthetic pathway for UDP-N-acetylglucosamine (UDP-GlcNAc). The C-terminal domain catalyzes the transfer of acetyl group from acetyl coenzyme A to glucosamine-1-phosphate (GlcN-1-P) to produce N-acetylglucosamine-1-phosphate (GlcNAc-1-P), which is converted into UDP-GlcNAc by the transfer of uridine 5-monophosphate (from uridine 5-triphosphate), a reaction catalyzed by the N-terminal domain. The polypeptide is Bifunctional protein GlmU (glmU) (Priestia megaterium (Bacillus megaterium)).